The primary structure comprises 79 residues: Large ribosomal subunit protein bL31 (79 aa).

Belongs to the bacterial ribosomal protein bL31 family. Type A subfamily. Part of the 50S ribosomal subunit.

Functionally, binds the 23S rRNA. The sequence is that of Large ribosomal subunit protein bL31 from Synechococcus sp. (strain CC9902).